The chain runs to 777 residues: Type IV pilus biogenesis and competence protein PilQ (777 aa).

A signal peptide spans 1–24 (MNTKLTKIISGLFVATAAFQTASA). 2 stretches are compositionally biased toward low complexity: residues 135–154 (ARPA…AAAP) and 197–233 (ASAK…PAKQ). Disordered stretches follow at residues 135-156 (ARPA…APST) and 197-236 (ASAK…QTNI).

This sequence belongs to the bacterial secretin family. PilQ subfamily. As to quaternary structure, homododecamer. Tetramer of trimer.

The protein localises to the cell outer membrane. Its function is as follows. Required for type IV pilus biogenesis and competence. Could function as a pore for exit of the pilus but also as a channel for entry of heme and antimicrobial agents and uptake of transforming DNA. The protein is Type IV pilus biogenesis and competence protein PilQ (pilQ) of Neisseria meningitidis serogroup B / serotype 15 (strain H44/76).